We begin with the raw amino-acid sequence, 410 residues long: Peptidase T (410 aa).

Zn(2+) is bound at residue H78. The active site involves D80. D140 lines the Zn(2+) pocket. Catalysis depends on E174, which acts as the Proton acceptor. E175, D197, and H379 together coordinate Zn(2+).

This sequence belongs to the peptidase M20B family. Requires Zn(2+) as cofactor.

The protein localises to the cytoplasm. The enzyme catalyses Release of the N-terminal residue from a tripeptide.. In terms of biological role, cleaves the N-terminal amino acid of tripeptides. In Vibrio cholerae serotype O1 (strain ATCC 39315 / El Tor Inaba N16961), this protein is Peptidase T.